We begin with the raw amino-acid sequence, 108 residues long: Peptidyl-prolyl cis-trans isomerase FKBP1B (108 aa).

The PPIase FKBP-type domain occupies 20 to 108; it reads GQTCVVHYTG…IFGVELLNLE (89 aa).

It belongs to the FKBP-type PPIase family. FKBP1 subfamily. Identified in a complex composed of RYR2, FKBP1B, PKA catalytic subunit, PRKAR2A, AKAP6, and the protein phosphatases PP2A and PP1. Interacts directly with RYR2.

It localises to the cytoplasm. It is found in the sarcoplasmic reticulum. It catalyses the reaction [protein]-peptidylproline (omega=180) = [protein]-peptidylproline (omega=0). Its activity is regulated as follows. Inhibited by both FK506 and rapamycin. Its function is as follows. Has the potential to contribute to the immunosuppressive and toxic effects of FK506 and rapamycin. PPIases accelerate the folding of proteins. It catalyzes the cis-trans isomerization of proline imidic peptide bonds in oligopeptides. This is Peptidyl-prolyl cis-trans isomerase FKBP1B (FKBP1B) from Oryctolagus cuniculus (Rabbit).